The following is a 239-amino-acid chain: ATP-dependent dethiobiotin synthetase BioD (239 aa).

ATP is bound at residue 15–20; sequence EIGKTF. Position 19 (Thr-19) interacts with Mg(2+). Residue Lys-40 is part of the active site. ATP contacts are provided by residues Asp-57, 118–121, 178–179, and 211–213; these read EGVG, NH, and AHL. Mg(2+) contacts are provided by Asp-57 and Glu-118.

It belongs to the dethiobiotin synthetase family. As to quaternary structure, homodimer. Mg(2+) is required as a cofactor.

The protein resides in the cytoplasm. It catalyses the reaction (7R,8S)-7,8-diammoniononanoate + CO2 + ATP = (4R,5S)-dethiobiotin + ADP + phosphate + 3 H(+). It functions in the pathway cofactor biosynthesis; biotin biosynthesis; biotin from 7,8-diaminononanoate: step 1/2. In terms of biological role, catalyzes a mechanistically unusual reaction, the ATP-dependent insertion of CO2 between the N7 and N8 nitrogen atoms of 7,8-diaminopelargonic acid (DAPA, also called 7,8-diammoniononanoate) to form a ureido ring. The sequence is that of ATP-dependent dethiobiotin synthetase BioD from Burkholderia ambifaria (strain MC40-6).